Reading from the N-terminus, the 990-residue chain is Activator of stress genes protein 1 (990 aa).

Residues 1 to 88 (MPKREIEDTQ…NKPKSQENKR (88 aa)) form a disordered region. Over residues 9–23 (TQSPYSSTGLVSTGE) the composition is skewed to polar residues. Residues 24–61 (SPKTSTSTPTSSTNNRAATTTTNNTSTTSTSLLKSNSN) are compositionally biased toward low complexity. A DNA-binding region (zn(2)-C6 fungal-type) is located at residues 95–121 (CDTCRQKKVKCDGKQPCIHCTVYSYKC). Composition is skewed to low complexity over residues 160–179 (NNNS…QQHV), 282–293 (SFDDSSNSAVSS), and 773–793 (TATT…NSNS). 4 disordered regions span residues 160–192 (NNNS…PADE), 255–295 (QDPD…SSPR), 764–800 (RTAS…TLPA), and 915–944 (SNNN…NGVA).

Belongs to the ASG1 family.

The protein resides in the nucleus. Transcription factor necessary to sustain growth on non-fermentative carbon sources such as sodium acetate, acetic acid, or ethanol. Plays a role in hyphal formation. This Candida albicans (strain SC5314 / ATCC MYA-2876) (Yeast) protein is Activator of stress genes protein 1 (ASG1).